A 444-amino-acid polypeptide reads, in one-letter code: Transcriptional regulatory protein GlrR (444 aa).

Residues 7-121 (HLLLVDDDPG…ALYQAIDDAL (115 aa)) form the Response regulatory domain. Aspartate 56 carries the post-translational modification 4-aspartylphosphate. The 231-residue stretch at 136 to 366 (IVTRSPLMLR…VNVIEQCVAL (231 aa)) folds into the Sigma-54 factor interaction domain. Residues 164–171 (GQSGTGKE) and 227–236 (AEGGTLFLDE) each bind ATP. The segment at residues 414-433 (VTHAARMAGRNRTEFYKLLS) is a DNA-binding region (H-T-H motif).

In terms of processing, phosphorylated by GlrK.

The protein resides in the cytoplasm. Functionally, member of the two-component regulatory system GlrR/GlrK that up-regulates transcription of the glmY sRNA when cells enter the stationary growth phase. Regulates glmY transcription by binding to three conserved sites in the purL-glmY intergenic region. The polypeptide is Transcriptional regulatory protein GlrR (glrR) (Escherichia coli (strain K12)).